Consider the following 182-residue polypeptide: Glycerol-3-phosphate acyltransferase 1 (182 aa).

5 helical membrane passes run 5–25 (MQFL…AYIV), 54–74 (GYFI…VSIA), 81–101 (STFV…PIVF), 117–137 (IAFD…FYLI), and 157–177 (ILYS…VLIL).

This sequence belongs to the PlsY family. Probably interacts with PlsX.

The protein localises to the cell membrane. It carries out the reaction an acyl phosphate + sn-glycerol 3-phosphate = a 1-acyl-sn-glycero-3-phosphate + phosphate. It functions in the pathway lipid metabolism; phospholipid metabolism. In terms of biological role, catalyzes the transfer of an acyl group from acyl-phosphate (acyl-PO(4)) to glycerol-3-phosphate (G3P) to form lysophosphatidic acid (LPA). This enzyme utilizes acyl-phosphate as fatty acyl donor, but not acyl-CoA or acyl-ACP. The sequence is that of Glycerol-3-phosphate acyltransferase 1 from Bacillus cereus (strain ATCC 10987 / NRS 248).